The sequence spans 816 residues: Cation/H(+) antiporter 8 (816 aa).

A run of 12 helical transmembrane segments spans residues proline 64 to phenylalanine 84, methionine 97 to isoleucine 117, isoleucine 127 to valine 147, valine 163 to lysine 183, valine 197 to leucine 214, valine 227 to valine 247, alanine 255 to valine 275, isoleucine 297 to phenylalanine 317, leucine 343 to threonine 363, phenylalanine 382 to valine 402, serine 413 to phenylalanine 433, and isoleucine 447 to tyrosine 467.

It belongs to the monovalent cation:proton antiporter 2 (CPA2) transporter (TC 2.A.37) family. CHX (TC 2.A.37.4) subfamily. In terms of tissue distribution, specifically expressed in pollen.

The protein resides in the membrane. May operate as a cation/H(+) antiporter. The chain is Cation/H(+) antiporter 8 (CHX8) from Arabidopsis thaliana (Mouse-ear cress).